The following is a 624-amino-acid chain: Cell pattern formation-associated protein ust1 (624 aa).

Disordered stretches follow at residues 1 to 24 (MSTA…APTG) and 43 to 99 (RSGS…GHSS). The span at 43–62 (RSGSVPASASGSAPGSASGS) shows a compositional bias: low complexity. Basic residues predominate over residues 70–85 (QHHTGHHHYSAHHTHS). Residues 233-339 (RVTTTLWEDE…PNIQSFLYHP (107 aa)) form the HTH APSES-type domain. Residues 267–288 (GTKLLNVCGMSRGKRDGILKNE) constitute a DNA-binding region (H-T-H motif). Residues 352-362 (AQERQAQRQRA) are compositionally biased toward low complexity. Disordered stretches follow at residues 352-456 (AQER…QQQQ), 474-504 (QQAY…LNNS), and 538-624 (SWND…IHHE). The segment covering 369–391 (PGANGTSQAPPLMRANTTPSNGD) has biased composition (polar residues). A compositionally biased stretch (low complexity) spans 392 to 426 (TSTFSSGLSSLGSWTGSHDQGHASAPTTAQPSPSS). Positions 427 to 451 (MHNGATQMHMSLSNHGTASPTYAQS) are enriched in polar residues. A compositionally biased stretch (basic and acidic residues) spans 571-587 (LDGDDLHSPDSSDDRLA). A compositionally biased stretch (gly residues) spans 615–624 (VGNGSGIHHE).

The protein belongs to the EFG1/PHD1/stuA family. Phosphorylated but is not a target of cAMP signaling.

The protein resides in the nucleus. Functionally, transcription factor that regulates asexual reproduction. Binds the StuA-response elements (StRE) with the consensus sequence 5'-(A/T)CGCG(T/A)N(A/C)-3' at the promoters of target genes. Regulates dimorphism, virulence, and the sporulation program. Required for mating, gall induction, and sporogenesis in maize tissue. Regulates expression of the filament-down-regulated gene UM00205 and the teliospore-specific gene ssp1. The chain is Cell pattern formation-associated protein ust1 (ust1) from Mycosarcoma maydis (Corn smut fungus).